Reading from the N-terminus, the 165-residue chain is Protoporphyrinogen IX oxidase (165 aa).

4 consecutive transmembrane segments (helical) span residues 26–46 (LHVI…RLFV), 77–97 (AMIA…IVDW), 99–119 (MLWP…HMWL), and 145–165 (PTLL…YWGF). H27 serves as a coordination point for heme. K105 contacts heme.

The protein belongs to the HemJ family. In terms of assembly, homodimer. Heme b is required as a cofactor.

It is found in the cell membrane. The catalysed reaction is protoporphyrinogen IX + 3 A = protoporphyrin IX + 3 AH2. The protein operates within porphyrin-containing compound metabolism; protoporphyrin-IX biosynthesis; protoporphyrin-IX from protoporphyrinogen-IX: step 1/1. Catalyzes the oxidation of protoporphyrinogen IX to protoporphyrin IX. Is involved in the biosynthesis of tetrapyrrole molecules like heme and chlorophyll. Does not use oxygen or artificial electron acceptors such as menadione or benzoquinone. This chain is Protoporphyrinogen IX oxidase, found in Cereibacter sphaeroides (strain ATCC 17023 / DSM 158 / JCM 6121 / CCUG 31486 / LMG 2827 / NBRC 12203 / NCIMB 8253 / ATH 2.4.1.) (Rhodobacter sphaeroides).